We begin with the raw amino-acid sequence, 353 residues long: Protein RecA (353 aa).

ATP is bound at residue 74–81 (GPESSGKT).

This sequence belongs to the RecA family.

It is found in the cytoplasm. Can catalyze the hydrolysis of ATP in the presence of single-stranded DNA, the ATP-dependent uptake of single-stranded DNA by duplex DNA, and the ATP-dependent hybridization of homologous single-stranded DNAs. It interacts with LexA causing its activation and leading to its autocatalytic cleavage. This Bordetella bronchiseptica (strain ATCC BAA-588 / NCTC 13252 / RB50) (Alcaligenes bronchisepticus) protein is Protein RecA.